We begin with the raw amino-acid sequence, 156 residues long: Crossover junction endodeoxyribonuclease RuvC (156 aa).

Residues aspartate 7, glutamate 67, and aspartate 139 contribute to the active site. Mg(2+) contacts are provided by aspartate 7, glutamate 67, and aspartate 139.

It belongs to the RuvC family. As to quaternary structure, homodimer which binds Holliday junction (HJ) DNA. The HJ becomes 2-fold symmetrical on binding to RuvC with unstacked arms; it has a different conformation from HJ DNA in complex with RuvA. In the full resolvosome a probable DNA-RuvA(4)-RuvB(12)-RuvC(2) complex forms which resolves the HJ. Mg(2+) is required as a cofactor.

It is found in the cytoplasm. It carries out the reaction Endonucleolytic cleavage at a junction such as a reciprocal single-stranded crossover between two homologous DNA duplexes (Holliday junction).. The RuvA-RuvB-RuvC complex processes Holliday junction (HJ) DNA during genetic recombination and DNA repair. Endonuclease that resolves HJ intermediates. Cleaves cruciform DNA by making single-stranded nicks across the HJ at symmetrical positions within the homologous arms, yielding a 5'-phosphate and a 3'-hydroxyl group; requires a central core of homology in the junction. The consensus cleavage sequence is 5'-(A/T)TT(C/G)-3'. Cleavage occurs on the 3'-side of the TT dinucleotide at the point of strand exchange. HJ branch migration catalyzed by RuvA-RuvB allows RuvC to scan DNA until it finds its consensus sequence, where it cleaves and resolves the cruciform DNA. The protein is Crossover junction endodeoxyribonuclease RuvC of Sphingopyxis alaskensis (strain DSM 13593 / LMG 18877 / RB2256) (Sphingomonas alaskensis).